Reading from the N-terminus, the 117-residue chain is MEAKAVARTIRIAPRKVRLVLDLIRGKNAGEAIAILKLTNKASSPVIEKVLMSALANAEHNYDMNTDELVVKEAYANEGPTLKRFRPRAQGRASAINKRTSHITIVVSDGKEEAKEA.

It belongs to the universal ribosomal protein uL22 family. Part of the 50S ribosomal subunit.

This protein binds specifically to 23S rRNA; its binding is stimulated by other ribosomal proteins, e.g. L4, L17, and L20. It is important during the early stages of 50S assembly. It makes multiple contacts with different domains of the 23S rRNA in the assembled 50S subunit and ribosome. Its function is as follows. The globular domain of the protein is located near the polypeptide exit tunnel on the outside of the subunit, while an extended beta-hairpin is found that lines the wall of the exit tunnel in the center of the 70S ribosome. This is Large ribosomal subunit protein uL22 from Staphylococcus epidermidis (strain ATCC 35984 / DSM 28319 / BCRC 17069 / CCUG 31568 / BM 3577 / RP62A).